The primary structure comprises 165 residues: Putative 4-hydroxy-4-methyl-2-oxoglutarate aldolase (165 aa).

Substrate contacts are provided by residues 80–83 and R102; that span reads GGNL. D103 lines the a divalent metal cation pocket.

Belongs to the class II aldolase/RraA-like family. As to quaternary structure, homotrimer. The cofactor is a divalent metal cation.

It catalyses the reaction 4-hydroxy-4-methyl-2-oxoglutarate = 2 pyruvate. The enzyme catalyses oxaloacetate + H(+) = pyruvate + CO2. In terms of biological role, catalyzes the aldol cleavage of 4-hydroxy-4-methyl-2-oxoglutarate (HMG) into 2 molecules of pyruvate. Also contains a secondary oxaloacetate (OAA) decarboxylase activity due to the common pyruvate enolate transition state formed following C-C bond cleavage in the retro-aldol and decarboxylation reactions. This chain is Putative 4-hydroxy-4-methyl-2-oxoglutarate aldolase, found in Cupriavidus necator (strain ATCC 17699 / DSM 428 / KCTC 22496 / NCIMB 10442 / H16 / Stanier 337) (Ralstonia eutropha).